A 230-amino-acid polypeptide reads, in one-letter code: Acetyltransferase (230 aa).

The region spanning 143 to 230 (RYLDGKVICD…RVAVYKARQT (88 aa)) is the N-acetyltransferase domain.

The protein operates within mycotoxin biosynthesis. Functionally, acetyltransferase; part of the satratoxin SC3 cluster involved in the biosynthesis of satratoxins, trichothecene mycotoxins that are associated with human food poisonings. Satratoxins are suggested to be made by products of multiple gene clusters (SC1, SC2 and SC3) that encode 21 proteins in all, including polyketide synthases, acetyltransferases, and other enzymes expected to modify the trichothecene skeleton. SC1 encodes 10 proteins, SAT1 to SAT10. The largest are SAT8, which encodes a putative polyketide synthase (PKS) with a conventional non-reducing architecture, and SAT10, a putative protein containing four ankyrin repeats and thus may be involved in protein scaffolding. The putative short-chain reductase SAT3 may assist the PKS in some capacity. SAT6 contains a secretory lipase domain and acts probably as a trichothecene esterase. SAT5 encodes a putative acetyltransferase, and so, with SAT6, may affect endogenous protection from toxicity. The probable transcription factor SAT9 may regulate the expression of the SC1 cluster. SC2 encodes proteins SAT11 to SAT16, the largest of which encodes the putative reducing PKS SAT13. SAT11 is a cytochrome P450 monooxygenase, while SAT14 and SAT16 are probable acetyltransferases. The SC2 cluster may be regulated by the transcription factor SAT15. SC3 is a small cluster that encodes 5 proteins, SAT17 to SAT21. SAT21 is a putative MFS-type transporter which may have a role in exporting secondary metabolites. The four other proteins putatively encoded in SC3 include the taurine hydroxylase-like protein SAT17, the O-methyltransferase SAT18, the acetyltransferase SAT19, and the Cys6-type zinc finger SAT20, the latter being probably involved in regulation of SC3 expression. This is Acetyltransferase from Stachybotrys chartarum (strain CBS 109288 / IBT 7711) (Toxic black mold).